Consider the following 216-residue polypeptide: Ras-related protein Rab-5C (216 aa).

GTP is bound by residues Ser-30, Ala-31, Gly-33, Lys-34, Ser-35, Ser-36, His-47, Glu-48, Thr-53, and Gly-79. Ser-35 contributes to the Mg(2+) binding site. 2 short sequence motifs (switch) span residues 45-57 (QFHEYQESTIGAA) and 78-94 (AGQERYHSLAPMYYRGA). Residue Thr-53 participates in Mg(2+) binding. Ser-85 is subject to Phosphoserine. GTP contacts are provided by Asn-134, Lys-135, Asp-137, Ala-165, and Lys-166. Residues 185-216 (NEPQNAAGAPGRNRGVDLQENNPASRSQCCSN) are disordered. Residues 203–216 (QENNPASRSQCCSN) show a composition bias toward polar residues. S-geranylgeranyl cysteine attachment occurs at residues Cys-213 and Cys-214.

It belongs to the small GTPase superfamily. Rab family. As to quaternary structure, interacts with EEA1 and INCA1. Interacts with GDI1, GDI2, CHML and CHM; phosphorylation at Ser-85 disrupts this interaction. Requires Mg(2+) as cofactor. Post-translationally, phosphorylation of Ser-85 in the switch II region by LRRK2 prevents the association of RAB regulatory proteins, including CHM, CHML and RAB GDP dissociation inhibitors GDI1 and GDI2.

It localises to the cell membrane. The protein resides in the early endosome membrane. The protein localises to the melanosome. The enzyme catalyses GTP + H2O = GDP + phosphate + H(+). With respect to regulation, regulated by guanine nucleotide exchange factors (GEFs) which promote the exchange of bound GDP for free GTP. Regulated by GTPase activating proteins (GAPs) which increase the GTP hydrolysis activity. Inhibited by GDP dissociation inhibitors (GDIs). Its function is as follows. The small GTPases Rab are key regulators of intracellular membrane trafficking, from the formation of transport vesicles to their fusion with membranes. Rabs cycle between an inactive GDP-bound form and an active GTP-bound form that is able to recruit to membranes different sets of downstream effectors directly responsible for vesicle formation, movement, tethering and fusion. The chain is Ras-related protein Rab-5C (RAB5C) from Bos taurus (Bovine).